Consider the following 359-residue polypeptide: Type-1 angiotensin II receptor (359 aa).

Residues M1–N25 lie on the Extracellular side of the membrane. N4 carries N-linked (GlcNAc...) asparagine glycosylation. The angiotensin II site is built by Q15 and D17. 2 disulfide bridges follow: C18–C274 and C101–C180. The chain crosses the membrane as a helical span at residues Y26–F55. Topologically, residues Y56–T61 are cytoplasmic. A helical transmembrane segment spans residues V62–A89. The Extracellular portion of the chain corresponds to M90–N98. Residues Y99–D125 traverse the membrane as a helical segment. The Cytoplasmic segment spans residues R126 to T141. A helical membrane pass occupies residues M142–I165. Topologically, residues H166–T190 are extracellular. An angiotensin II-binding site is contributed by R167. N176 carries N-linked (GlcNAc...) asparagine glycosylation. 3 residues coordinate angiotensin II: F182, H183, and Y184. N188 carries an N-linked (GlcNAc...) asparagine glycan. A helical membrane pass occupies residues L191–T216. Position 199 (K199) interacts with angiotensin II. Residues L217–F239 lie on the Cytoplasmic side of the membrane. A helical transmembrane segment spans residues K240 to L268. The Extracellular segment spans residues G269–D278. Residues I279–F304 traverse the membrane as a helical segment. Residues L305–E359 are Cytoplasmic-facing. Residues S335–S352 are compositionally biased toward polar residues. A disordered region spans residues S335–E359. C355 carries the S-palmitoyl cysteine lipid modification.

Belongs to the G-protein coupled receptor 1 family. In terms of assembly, interacts with MAS1. Interacts with ARRB1. Interacts with FLNA (via filamin repeat 21); increases PKA-mediated phosphorylation of FLNA. C-terminal Ser or Thr residues may be phosphorylated. Adrenal, liver, aorta, kidney, lung, testis and heart.

Its subcellular location is the cell membrane. In terms of biological role, receptor for angiotensin II, a vasoconstricting peptide, which acts as a key regulator of blood pressure and sodium retention by the kidney. The activated receptor in turn couples to G-alpha proteins G(q) (GNAQ, GNA11, GNA14 or GNA15) and thus activates phospholipase C and increases the cytosolic Ca(2+) concentrations, which in turn triggers cellular responses such as stimulation of protein kinase C. The protein is Type-1 angiotensin II receptor (AGTR1) of Canis lupus familiaris (Dog).